Here is a 760-residue protein sequence, read N- to C-terminus: RxLR effector protein PSR2 (760 aa).

Positions 1–21 (MGCRYAVLALAVAYFAGSIAA) are cleaved as a signal peptide. The RxLR-dEER motif lies at 47–62 (RFLRAANTADERNEDR). Residues 87 to 134 (PLLSWFEKKKSPDYVFLKLKINKGKQQLFDHPDWNVWVQYTTSVVKSD) form a WY1 repeat. The 7 X 93 AA tandem repeats stretch occupies residues 87 to 760 (PLLSWFEKKK…TTKYMERYGQ (674 aa)). The stretch at 135–221 (PEEAMIAALR…MKLYNSKPVN (87 aa)) is one LWY2 repeat. The LWY3 repeat unit spans residues 222–312 (KKQQVTLVSM…KYVDNYNRDF (91 aa)). An LWY4 repeat occupies 313–403 (PDEATTVMAT…KYVEDLNLKP (91 aa)). Residues 404–496 (EHNDLQVSII…KFLEHYYKSF (93 aa)) form an LWY5 repeat. The stretch at 497 to 584 (PTPMMSALAK…RYLDEFNKKF (88 aa)) is one LWY6 repeat. The LWY7 repeat unit spans residues 585–760 (PDEKVSMTDT…TTKYMERYGQ (176 aa)).

The protein belongs to the RxLR effector family. In terms of assembly, interacts with host dsRNA-binding protein DRB4.

It localises to the secreted. Its subcellular location is the host cell. Secreted effector that possesses RNA silencing suppression activity by inhibiting the biogenesis of small RNAs in the host plant to promote enhanced susceptibility of host to the pathogen during infection. Interferes with secondary siRNA production by associating with host dsRNA-binding protein DRB4. Inhibits the host salicylic acid pathway during infection. In Phytophthora infestans (strain T30-4) (Potato late blight agent), this protein is RxLR effector protein PSR2.